The primary structure comprises 208 residues: uncharacterized protein (208 aa).

6 helical membrane passes run 5–25 (VIGI…KEAW), 41–61 (MLLI…IAAL), 69–89 (ANGI…LFFL), 123–143 (VLLG…ICGL), 150–170 (VFFF…TIAG), and 176–196 (NKLL…LVIY).

It is found in the cell membrane. This is an uncharacterized protein from Bacillus subtilis (strain 168).